The following is a 206-amino-acid chain: Large ribosomal subunit protein uL4 (206 aa).

A disordered region spans residues 43–78; the sequence is NQRQGTHDTKTRAEVRGGGRKPWRQKGTGRARAGSS. Over residues 47–59 the composition is skewed to basic and acidic residues; it reads GTHDTKTRAEVRG. Residues 60 to 71 are compositionally biased toward basic residues; sequence GGRKPWRQKGTG.

This sequence belongs to the universal ribosomal protein uL4 family. In terms of assembly, part of the 50S ribosomal subunit.

One of the primary rRNA binding proteins, this protein initially binds near the 5'-end of the 23S rRNA. It is important during the early stages of 50S assembly. It makes multiple contacts with different domains of the 23S rRNA in the assembled 50S subunit and ribosome. Functionally, forms part of the polypeptide exit tunnel. The polypeptide is Large ribosomal subunit protein uL4 (Desulforamulus reducens (strain ATCC BAA-1160 / DSM 100696 / MI-1) (Desulfotomaculum reducens)).